Consider the following 228-residue polypeptide: Thymidylate kinase (228 aa).

20 to 27 (GGEGSGKS) contacts ATP.

Belongs to the thymidylate kinase family.

It catalyses the reaction dTMP + ATP = dTDP + ADP. In terms of biological role, phosphorylation of dTMP to form dTDP in both de novo and salvage pathways of dTTP synthesis. The protein is Thymidylate kinase of Afipia carboxidovorans (strain ATCC 49405 / DSM 1227 / KCTC 32145 / OM5) (Oligotropha carboxidovorans).